Consider the following 220-residue polypeptide: Peptidyl-tRNA hydrolase (220 aa).

Residue Y14 participates in tRNA binding. Catalysis depends on H19, which acts as the Proton acceptor. 3 residues coordinate tRNA: F60, N62, and N106.

Belongs to the PTH family. As to quaternary structure, monomer.

The protein resides in the cytoplasm. The catalysed reaction is an N-acyl-L-alpha-aminoacyl-tRNA + H2O = an N-acyl-L-amino acid + a tRNA + H(+). In terms of biological role, hydrolyzes ribosome-free peptidyl-tRNAs (with 1 or more amino acids incorporated), which drop off the ribosome during protein synthesis, or as a result of ribosome stalling. Functionally, catalyzes the release of premature peptidyl moieties from peptidyl-tRNA molecules trapped in stalled 50S ribosomal subunits, and thus maintains levels of free tRNAs and 50S ribosomes. The chain is Peptidyl-tRNA hydrolase from Campylobacter hominis (strain ATCC BAA-381 / DSM 21671 / CCUG 45161 / LMG 19568 / NCTC 13146 / CH001A).